We begin with the raw amino-acid sequence, 243 residues long: Pleckstrin homology domain-containing family B member 1 (243 aa).

The PH domain occupies 21–128; that stretch reads ALVRGGWLWR…WKTALLEANS (108 aa).

Homodimer. Interacts (via PH domain) with MYO1C. Interacts (via PH domain) with MYO7A. Binds transducins. As to expression, highly expressed in retina and brain. Levels are very low or not detectable in all other tissues tested.

Its subcellular location is the membrane. The protein localises to the cytoplasm. This chain is Pleckstrin homology domain-containing family B member 1 (PLEKHB1), found in Homo sapiens (Human).